Consider the following 663-residue polypeptide: MIDKRDDKPFKLKSKYKPSGDQPQAIESLVDNIEGGEKAQILLGATGTGKTYTMSQVISKVNKPTLVIAHNKTLAGQLYGEFKEFFPDNAVEYFVSYYDYYQPEAYVPSSDTYIEKDSSVNDEIDKLRHSATSSLLERNDVIVVASVSCIYGLGSPKEYADSAVSLRPGQEISRDTLLNQLVDIQFERNDIDFQRGCFRVRGDVVEVFPASRDEHAFRVEFFGDEIDRICEIESLTGKTIGEVDHLVLFPATHFVTNDEHMEQSIAKIQAELAEQLQLFESEGKLLEAQRLRQRTEYDIEMLREMGYTSGVENYSRHMDGRSPGEPPYTLLDFFPEDFLIMIDESHMTMGQIKGMYNGDQARKQMLVDYGFRLPSALDNRPLRREEFESHVHQIVYVSATPGEYEMSQTNTIIEQIIRPTGLLDPEIDVRSSMGQMDDLLGEINQRVARDERTFITTLTKKMAEDLTDYLKEMGVKVKYMHSDIKTLERTEIIRDLRLGVFDVLIGINLLREGIDVPEVSLVAILDADKEGFLRNERGLIQTIGRAARNVDGHVIMYADKMTDSMQRAIDETARRREIQIAYNKAHGIVPQTIKKDIRGLISISKTSHNDISKEEMDYESMSRGERKEAINALQKQMQEAAELLDFELAAQMRDLILELKLMD.

The span at 1 to 10 shows a compositional bias: basic and acidic residues; the sequence is MIDKRDDKPF. The disordered stretch occupies residues 1–23; sequence MIDKRDDKPFKLKSKYKPSGDQP. The 388-residue stretch at 31–418 folds into the Helicase ATP-binding domain; it reads DNIEGGEKAQ…TNTIIEQIIR (388 aa). An ATP-binding site is contributed by 44 to 51; that stretch reads GATGTGKT. Residues 97–120 carry the Beta-hairpin motif; that stretch reads YYDYYQPEAYVPSSDTYIEKDSSV. One can recognise a Helicase C-terminal domain in the interval 435–601; sequence QMDDLLGEIN…TIKKDIRGLI (167 aa). The region spanning 627–662 is the UVR domain; sequence KEAINALQKQMQEAAELLDFELAAQMRDLILELKLM.

The protein belongs to the UvrB family. In terms of assembly, forms a heterotetramer with UvrA during the search for lesions. Interacts with UvrC in an incision complex.

The protein resides in the cytoplasm. The UvrABC repair system catalyzes the recognition and processing of DNA lesions. A damage recognition complex composed of 2 UvrA and 2 UvrB subunits scans DNA for abnormalities. Upon binding of the UvrA(2)B(2) complex to a putative damaged site, the DNA wraps around one UvrB monomer. DNA wrap is dependent on ATP binding by UvrB and probably causes local melting of the DNA helix, facilitating insertion of UvrB beta-hairpin between the DNA strands. Then UvrB probes one DNA strand for the presence of a lesion. If a lesion is found the UvrA subunits dissociate and the UvrB-DNA preincision complex is formed. This complex is subsequently bound by UvrC and the second UvrB is released. If no lesion is found, the DNA wraps around the other UvrB subunit that will check the other stand for damage. The chain is UvrABC system protein B from Streptococcus pyogenes serotype M1.